The primary structure comprises 386 residues: ADP,ATP carrier protein, mitochondrial (386 aa).

Residues 1–77 (MADMNQHPTV…SNASPVFVQA (77 aa)) constitute a mitochondrion transit peptide. 3 Solcar repeats span residues 84–177 (AAFA…FKRL), 189–281 (KWFA…LKPV), and 289–375 (DSFF…LQVL). 5 consecutive transmembrane segments (helical) span residues 86–113 (FATDFLMGGVSAAVSKTAAAPIERVKLL), 154–178 (TANVIRYFPTQALNFAFKDYFKRLF), 187–207 (YWKWFAGNLASGGAAGASSLF), 257–278 (FNISCVGIIVYRGLYFGMYDSL), and 292–312 (FASFGLGWLITNGAGLASYPI). Arginine 159 and lysine 171 together coordinate ADP. Arginine 316 lines the ADP pocket. Positions 316–321 (RRRMMM) are important for transport activity. Positions 316–321 (RRRMMM) match the Nucleotide carrier signature motif motif. The helical transmembrane segment at 352–372 (AGANILRAVAGAGVLAGYDKL) threads the bilayer.

Belongs to the mitochondrial carrier (TC 2.A.29) family. As to quaternary structure, monomer.

Its subcellular location is the mitochondrion inner membrane. The catalysed reaction is ADP(in) + ATP(out) = ADP(out) + ATP(in). With respect to regulation, the matrix-open state (m-state) is inhibited by the membrane-permeable bongkrekic acid (BKA). The cytoplasmic-open state (c-state) is inhibited by the membrane-impermeable toxic inhibitor carboxyatractyloside (CATR). ADP:ATP antiporter that mediates import of ADP into the mitochondrial matrix for ATP synthesis, and export of ATP out to fuel the cell. Cycles between the cytoplasmic-open state (c-state) and the matrix-open state (m-state): operates by the alternating access mechanism with a single substrate-binding site intermittently exposed to either the cytosolic (c-state) or matrix (m-state) side of the inner mitochondrial membrane. The chain is ADP,ATP carrier protein, mitochondrial (ANT) from Solanum tuberosum (Potato).